The following is a 219-amino-acid chain: Claudin-3 (219 aa).

Over 1 to 8 (MSMGLEIT) the chain is Cytoplasmic. The helical transmembrane segment at 9-29 (GTSLAVLGWLCTIVCCALPMW) threads the bilayer. The Extracellular segment spans residues 30–80 (RVSAFIGSSIITAQITWEGLWMNCVVQSTGQMQCKMYDSLLALPQDLQAAR). The chain crosses the membrane as a helical span at residues 81–101 (ALIVVSILLAAFGLLVALVGA). Residues 102 to 115 (QCTNCVQDETAKAK) lie on the Cytoplasmic side of the membrane. A helical transmembrane segment spans residues 116-136 (ITIVAGVLFLLAAVLTLVPVS). Topologically, residues 137–161 (WSANTIIRDFYNPLVPEAQKREMGT) are extracellular. The chain crosses the membrane as a helical span at residues 162-182 (GLYVGWAAAALQLLGGALLCC). The Cytoplasmic segment spans residues 183-219 (SCPPREKYAPTKILYSAPRSTGPGTGTGTAYDRKDYV). At Tyr197 the chain carries Phosphotyrosine. A Phosphoserine modification is found at Ser198. The tract at residues 218 to 219 (YV) is interactions with TJP1, TJP2 and TJP3.

Belongs to the claudin family. Can form homo- and heteropolymers with other CLDN. Homopolymers interact with CLDN1 and CLDN2 homopolymers. Interacts in cis (within the same plasma membrane) with CLDN19. Directly interacts with TJP1/ZO-1, TJP2/ZO-2 and TJP3/ZO-3.

Its subcellular location is the cell junction. The protein resides in the tight junction. It localises to the cell membrane. In terms of biological role, plays a major role in tight junction-specific obliteration of the intercellular space, through calcium-independent cell-adhesion activity. This Rattus norvegicus (Rat) protein is Claudin-3 (Cldn3).